We begin with the raw amino-acid sequence, 644 residues long: Low affinity sulfate transporter 3 (644 aa).

Over residues 1–19 (MSSLGTEQFSERSQWVLNS) the composition is skewed to polar residues. The interval 1–20 (MSSLGTEQFSERSQWVLNSP) is disordered. A run of 13 helical transmembrane segments spans residues 50–70 (AVSF…YSAT), 76–96 (LLSG…YANL), 99–119 (LDPQ…ALMG), 124–144 (IAIG…PKVI), 156–176 (LVFT…VLRL), 179–199 (LVDF…AIVI), 242–262 (PLNF…RFIG), 268–288 (FFWL…LIVF), 328–348 (IGLI…RSFA), 394–414 (CKTA…LELF), 418–438 (LYYT…PGLI), 455–475 (LACL…GLLI), and 518–538 (PGIL…AGFV). The STAS domain maps to 511–635 (YPMAVTTPGI…LTVAEAVDAC (125 aa)).

The protein belongs to the SLC26A/SulP transporter (TC 2.A.53) family.

The protein resides in the membrane. Its function is as follows. Low-affinity H(+)/sulfate cotransporter which may be involved in the internal transport of sulfate between cellular or subcellular compartments within the plant. This is Low affinity sulfate transporter 3 (ST3) from Stylosanthes hamata (Caribbean stylo).